The chain runs to 311 residues: MNKNKPFIVVIVGPTASGKTELSIELAKRINGEIISGDSMQVYKHMNIGTAKVTPEEMDGIPHHLIDILNPDDTFSAYEFKRLAEDLITDITNRGKVPIIAGGTGLYIQSLIYNYELEDETVTPAQLSIVKQKLSALEHLDNQQLHDYLAQFDAVSAENIHPNNRQRVLRAIEYYLKTKKLLSNRKKVQQFTENYDTLLLGIEMSRKTLYSRINKRVDIMLDHGLFREVQQLVEQGYESCQSMQAIGYKELIPVINGQMIYEDAVNDLKQHSRQYAKRQMTWFKNKMSVHWLDKENMSLQMMLDEITTQIK.

13-20 is a binding site for ATP; that stretch reads GPTASGKT. Residue 15 to 20 coordinates substrate; it reads TASGKT. Interaction with substrate tRNA regions lie at residues 38 to 41 and 166 to 170; these read DSMQ and QRVLR.

It belongs to the IPP transferase family. Monomer. Requires Mg(2+) as cofactor.

The catalysed reaction is adenosine(37) in tRNA + dimethylallyl diphosphate = N(6)-dimethylallyladenosine(37) in tRNA + diphosphate. Its function is as follows. Catalyzes the transfer of a dimethylallyl group onto the adenine at position 37 in tRNAs that read codons beginning with uridine, leading to the formation of N6-(dimethylallyl)adenosine (i(6)A). This chain is tRNA dimethylallyltransferase, found in Staphylococcus aureus (strain Mu3 / ATCC 700698).